The following is a 102-amino-acid chain: Urease subunit beta (102 aa).

Belongs to the urease beta subunit family. In terms of assembly, heterotrimer of UreA (gamma), UreB (beta) and UreC (alpha) subunits. Three heterotrimers associate to form the active enzyme.

The protein resides in the cytoplasm. It catalyses the reaction urea + 2 H2O + H(+) = hydrogencarbonate + 2 NH4(+). The protein operates within nitrogen metabolism; urea degradation; CO(2) and NH(3) from urea (urease route): step 1/1. This Bordetella parapertussis (strain 12822 / ATCC BAA-587 / NCTC 13253) protein is Urease subunit beta.